Consider the following 95-residue polypeptide: Protein FAM240C (95 aa).

The disordered stretch occupies residues 68–95 (KMLQGPGRCPDRVPEATESLHTKDKKAA). Basic and acidic residues predominate over residues 76 to 95 (CPDRVPEATESLHTKDKKAA).

It belongs to the FAM240 family.

The polypeptide is Protein FAM240C (FAM240C) (Homo sapiens (Human)).